Here is a 321-residue protein sequence, read N- to C-terminus: Small ribosomal subunit biogenesis GTPase RsgA (321 aa).

In terms of domain architecture, CP-type G spans 89–248; sequence QSWINRPPVA…VADTPGFNRP (160 aa). Residues 138–141 and 190–198 each bind GTP; these read TKRD and GPSGVGKTS. 4 residues coordinate Zn(2+): cysteine 273, cysteine 278, histidine 280, and cysteine 286.

It belongs to the TRAFAC class YlqF/YawG GTPase family. RsgA subfamily. In terms of assembly, monomer. Associates with 30S ribosomal subunit, binds 16S rRNA. It depends on Zn(2+) as a cofactor.

The protein localises to the cytoplasm. One of several proteins that assist in the late maturation steps of the functional core of the 30S ribosomal subunit. Helps release RbfA from mature subunits. May play a role in the assembly of ribosomal proteins into the subunit. Circularly permuted GTPase that catalyzes slow GTP hydrolysis, GTPase activity is stimulated by the 30S ribosomal subunit. The sequence is that of Small ribosomal subunit biogenesis GTPase RsgA from Prochlorococcus marinus (strain MIT 9313).